We begin with the raw amino-acid sequence, 532 residues long: Glucose-6-phosphate isomerase (532 aa).

Catalysis depends on glutamate 330, which acts as the Proton donor. Active-site residues include histidine 359 and lysine 461.

It belongs to the GPI family.

The protein resides in the cytoplasm. It catalyses the reaction alpha-D-glucose 6-phosphate = beta-D-fructose 6-phosphate. The protein operates within carbohydrate biosynthesis; gluconeogenesis. It functions in the pathway carbohydrate degradation; glycolysis; D-glyceraldehyde 3-phosphate and glycerone phosphate from D-glucose: step 2/4. In terms of biological role, catalyzes the reversible isomerization of glucose-6-phosphate to fructose-6-phosphate. This chain is Glucose-6-phosphate isomerase, found in Synechococcus sp. (strain CC9902).